Consider the following 704-residue polypeptide: ATPase synthesis protein 25, mitochondrial (704 aa).

The transit peptide at 1-59 (MSGIALQGIRCHACRNAAFRSFAAISGLSSSIRRPQSSISYPGSKLYQRNVRTTGRRQF) directs the protein to the mitochondrion. Residues 57–72 (RQFSTLGSVKSQVDSD) are compositionally biased toward polar residues. The tract at residues 57–118 (RQFSTLGSVK…QELPPLPENP (62 aa)) is disordered. The segment covering 73–83 (LPTKTETKEDA) has biased composition (basic and acidic residues).

Belongs to the ATP25 family.

It is found in the mitochondrion inner membrane. In terms of biological role, probable mitochondrial mRNA stabilization factor. The chain is ATPase synthesis protein 25, mitochondrial (ATP25) from Arthroderma benhamiae (strain ATCC MYA-4681 / CBS 112371) (Trichophyton mentagrophytes).